Reading from the N-terminus, the 382-residue chain is MSSNLLRDAHRIVVKVGSSLVTNEGRGLDEAAIQEWSRQLAALVRGDESHGGQRREVIMVSSGAVAEGMKRLGWAARPKEIHELQAAAAVGQMGLIQMYESKLREQGMGSAQVLLTHADLADRERYLNARNTLLTLLELGIVPVINENDTVVNDEIKFGDNDTLGALVANLIEADALVILTDQRGLYSADPRSNPDARFIDVANAGDPALEEMAGGAGSSIGKGGMITKILAAKRAAGSGASTVIAWGREQDVLVRLAAGESIGTLLVAQTHKNQARKQWIADHLQLRGSVSVDAGAVAKLRDEGKSLLPIGMVNVDGEFARGDVIAVRDALGIEVARGLANYASAEARLLCRKSSVEIERLLGYSAGPEMVHRDNMVIAGH.

Lys-15 contacts ATP. Ser-62, Asp-149, and Asn-161 together coordinate substrate. 181–182 provides a ligand contact to ATP; it reads TD. One can recognise a PUA domain in the interval 288–366; it reads RGSVSVDAGA…VEIERLLGYS (79 aa).

It belongs to the glutamate 5-kinase family.

It is found in the cytoplasm. The enzyme catalyses L-glutamate + ATP = L-glutamyl 5-phosphate + ADP. The protein operates within amino-acid biosynthesis; L-proline biosynthesis; L-glutamate 5-semialdehyde from L-glutamate: step 1/2. In terms of biological role, catalyzes the transfer of a phosphate group to glutamate to form L-glutamate 5-phosphate. The sequence is that of Glutamate 5-kinase from Delftia acidovorans (strain DSM 14801 / SPH-1).